The primary structure comprises 363 residues: Chorismate synthase (363 aa).

Arg-48 and Arg-54 together coordinate NADP(+). FMN-binding positions include 125 to 127 (RSS), 237 to 238 (NA), Gly-277, 292 to 296 (KPTSS), and Arg-318.

It belongs to the chorismate synthase family. In terms of assembly, homotetramer. FMNH2 serves as cofactor.

It catalyses the reaction 5-O-(1-carboxyvinyl)-3-phosphoshikimate = chorismate + phosphate. It participates in metabolic intermediate biosynthesis; chorismate biosynthesis; chorismate from D-erythrose 4-phosphate and phosphoenolpyruvate: step 7/7. Its function is as follows. Catalyzes the anti-1,4-elimination of the C-3 phosphate and the C-6 proR hydrogen from 5-enolpyruvylshikimate-3-phosphate (EPSP) to yield chorismate, which is the branch point compound that serves as the starting substrate for the three terminal pathways of aromatic amino acid biosynthesis. This reaction introduces a second double bond into the aromatic ring system. The polypeptide is Chorismate synthase (Pseudomonas syringae pv. syringae (strain B728a)).